A 187-amino-acid polypeptide reads, in one-letter code: UPF0340 protein SPJ_0612 (187 aa).

Belongs to the UPF0340 family.

The sequence is that of UPF0340 protein SPJ_0612 from Streptococcus pneumoniae (strain JJA).